The chain runs to 112 residues: Evasin P1095 (112 aa).

A signal peptide spans 1–23 (MELNAFTILQIAVFIAVGYHANT). 3 disulfide bridges follow: cysteine 48/cysteine 66, cysteine 52/cysteine 68, and cysteine 62/cysteine 79. The N-linked (GlcNAc...) asparagine glycan is linked to asparagine 51. The interval 89-112 (GDPNDDPKINEATPQTQIFEKKRK) is disordered.

It localises to the secreted. Salivary chemokine-binding protein which binds to host chemokine CXCL8. The chain is Evasin P1095 from Ixodes ricinus (Common tick).